Consider the following 853-residue polypeptide: Protein translocase subunit SecA 1 (853 aa).

ATP is bound by residues Gln-85, 103–107 (GEGKT), and Asp-492.

Belongs to the SecA family. As to quaternary structure, monomer and homodimer. Part of the essential Sec protein translocation apparatus which comprises SecA, SecYEG and auxiliary proteins SecDF. Other proteins may also be involved.

The protein localises to the cell membrane. Its subcellular location is the cytoplasm. The catalysed reaction is ATP + H2O + cellular proteinSide 1 = ADP + phosphate + cellular proteinSide 2.. Part of the Sec protein translocase complex. Interacts with the SecYEG preprotein conducting channel. Has a central role in coupling the hydrolysis of ATP to the transfer of proteins into and across the cell membrane, serving as an ATP-driven molecular motor driving the stepwise translocation of polypeptide chains across the membrane. This chain is Protein translocase subunit SecA 1, found in Corynebacterium diphtheriae (strain ATCC 700971 / NCTC 13129 / Biotype gravis).